A 150-amino-acid polypeptide reads, in one-letter code: Large ribosomal subunit protein bL9 (150 aa).

This sequence belongs to the bacterial ribosomal protein bL9 family.

Binds to the 23S rRNA. The protein is Large ribosomal subunit protein bL9 of Streptococcus agalactiae serotype Ia (strain ATCC 27591 / A909 / CDC SS700).